The chain runs to 209 residues: A-type ATP synthase subunit D (209 aa).

It belongs to the V-ATPase D subunit family. In terms of assembly, has multiple subunits with at least A(3), B(3), C, D, E, F, H, I and proteolipid K(x).

Its subcellular location is the cell membrane. Component of the A-type ATP synthase that produces ATP from ADP in the presence of a proton gradient across the membrane. The protein is A-type ATP synthase subunit D of Archaeoglobus fulgidus (strain ATCC 49558 / DSM 4304 / JCM 9628 / NBRC 100126 / VC-16).